A 188-amino-acid chain; its full sequence is Kininogen (188 aa).

Residues N36, N150, and N182 are each glycosylated (N-linked (GlcNAc...) asparagine).

Post-translationally, bradykinin is released from kininogen by kallikrein. N-glycosylated. Contains O-acetylated sialic acids as terminal elements on biantennary and triantennary N-glycans.

Functionally, inhibits papain and ficin (cysteine proteinases) but not trypsin (a serine proteinase). The chain is Kininogen from Anarhichas minor (Arctic spotted wolffish).